Consider the following 128-residue polypeptide: Organic solute transporter subunit beta (128 aa).

Residues 1–30 (MDHSAEKAAANAEVPQELLEEMLWYFRAED) lie on the Extracellular side of the membrane. The chain crosses the membrane as a helical span at residues 31 to 53 (AAPWNYSILVLAVLVVMTSMFLL). At 54 to 128 (RRSILANRNR…FLPDPQETES (75 aa)) the chain is on the cytoplasmic side. Disordered regions lie at residues 61-80 (RNRK…HLDD) and 101-128 (PDLA…ETES). Composition is skewed to basic and acidic residues over residues 66-80 (QPQD…HLDD) and 101-115 (PDLA…EKDS). A Phosphoserine modification is found at Ser116.

This sequence belongs to the OST-beta family. As to quaternary structure, interacts with SLC51A. The Ost-alpha/Ost-beta complex is a heterodimer composed of alpha (SLC51A) and beta (SLC51B) subunit; induces the transport of SLC51A from the endoplasmic reticulum to the plasma membrane. Present at high level in ileum. In ileum, it is restricted to the apical domain on the mature villus enterocytes with little detectable expression in the goblet cells or crypt enterocytes (at protein level). Expressed in kidney but not in heart, brain, liver, spleen, embryo, lung, thymus, ovary nor testis.

It is found in the cell membrane. It carries out the reaction taurocholate(out) = taurocholate(in). It catalyses the reaction tauroursodeoxycholate(out) = tauroursodeoxycholate(in). The enzyme catalyses glycoursodeoxycholate(out) = glycoursodeoxycholate(in). The catalysed reaction is glycocholate(out) = glycocholate(in). It carries out the reaction taurochenodeoxycholate(out) = taurochenodeoxycholate(in). It catalyses the reaction glycochenodeoxycholate(out) = glycochenodeoxycholate(in). The enzyme catalyses taurodeoxycholate(out) = taurodeoxycholate(in). The catalysed reaction is glycodeoxycholate(out) = glycodeoxycholate(in). It carries out the reaction prostaglandin E2(out) = prostaglandin E2(in). It catalyses the reaction estrone 3-sulfate(out) = estrone 3-sulfate(in). The enzyme catalyses dehydroepiandrosterone 3-sulfate(out) = dehydroepiandrosterone 3-sulfate(in). Functionally, essential component of the Ost-alpha/Ost-beta complex, a heterodimer that acts as the intestinal basolateral transporter responsible for bile acid export from enterocytes into portal blood. The Ost-alpha/Ost-beta complex efficiently transports the major species of bile acids (taurocholate). Taurine conjugates are transported more efficiently across the basolateral membrane than glycine-conjugated bile acids. Can also transport steroids such as estrone 3-sulfate and dehydroepiandrosterone 3-sulfate, therefore playing a role in the enterohepatic circulation of sterols. Able to transport eicosanoids such as prostaglandin E2. Modulates SLC51A glycosylation, membrane trafficking and stability activities. The polypeptide is Organic solute transporter subunit beta (Slc51b) (Mus musculus (Mouse)).